The following is a 214-amino-acid chain: ATP phosphoribosyltransferase (214 aa).

It belongs to the ATP phosphoribosyltransferase family. Short subfamily. As to quaternary structure, heteromultimer composed of HisG and HisZ subunits.

It localises to the cytoplasm. The enzyme catalyses 1-(5-phospho-beta-D-ribosyl)-ATP + diphosphate = 5-phospho-alpha-D-ribose 1-diphosphate + ATP. Its pathway is amino-acid biosynthesis; L-histidine biosynthesis; L-histidine from 5-phospho-alpha-D-ribose 1-diphosphate: step 1/9. Its function is as follows. Catalyzes the condensation of ATP and 5-phosphoribose 1-diphosphate to form N'-(5'-phosphoribosyl)-ATP (PR-ATP). Has a crucial role in the pathway because the rate of histidine biosynthesis seems to be controlled primarily by regulation of HisG enzymatic activity. In Ruminiclostridium cellulolyticum (strain ATCC 35319 / DSM 5812 / JCM 6584 / H10) (Clostridium cellulolyticum), this protein is ATP phosphoribosyltransferase.